Here is a 129-residue protein sequence, read N- to C-terminus: HTH-type transcriptional regulator GlnR (129 aa).

One can recognise an HTH merR-type domain in the interval 10–78 (LFPIGIVMDL…MAGIKQVLLM (69 aa)). The H-T-H motif DNA-binding region spans 13–32 (IGIVMDLTQLSARQIRYYEE).

In terms of assembly, homodimer under conditions of nitrogen excess. Monomer under conditions of nitrogen-limited. Interacts with feedback-inhibited GlnA in order to stabilizes GlnR-DNA complex.

Its activity is regulated as follows. Under conditions of nitrogen excess, the DNA binding activity of GlnR is activated by a transient interaction with feedback-inhibited GlnA. Under conditions of nitrogen-limited, GlnR is autoinhibited by its C-terminal region. Transcription repressor during nitrogen excess. On the contrary of the MerR members, which require longer DNA sites for high-affinity binding, GlnR requires a DNA sequence of 17 nucleotides as minimal binding site. This Bacillus anthracis protein is HTH-type transcriptional regulator GlnR.